Consider the following 336-residue polypeptide: Holliday junction branch migration complex subunit RuvB (336 aa).

Residues Ala4–Tyr184 are large ATPase domain (RuvB-L). Residues Ile23, Arg24, Gly65, Lys68, Thr69, Thr70, Glu131–Tyr133, Arg174, Tyr184, and Arg221 each bind ATP. Thr69 lines the Mg(2+) pocket. The segment at Gln185–Asn255 is small ATPAse domain (RuvB-S). The tract at residues Ala258–Pro336 is head domain (RuvB-H). Residues Arg294, Arg313, and Arg318 each contribute to the DNA site.

It belongs to the RuvB family. Homohexamer. Forms an RuvA(8)-RuvB(12)-Holliday junction (HJ) complex. HJ DNA is sandwiched between 2 RuvA tetramers; dsDNA enters through RuvA and exits via RuvB. An RuvB hexamer assembles on each DNA strand where it exits the tetramer. Each RuvB hexamer is contacted by two RuvA subunits (via domain III) on 2 adjacent RuvB subunits; this complex drives branch migration. In the full resolvosome a probable DNA-RuvA(4)-RuvB(12)-RuvC(2) complex forms which resolves the HJ.

The protein resides in the cytoplasm. It carries out the reaction ATP + H2O = ADP + phosphate + H(+). The RuvA-RuvB-RuvC complex processes Holliday junction (HJ) DNA during genetic recombination and DNA repair, while the RuvA-RuvB complex plays an important role in the rescue of blocked DNA replication forks via replication fork reversal (RFR). RuvA specifically binds to HJ cruciform DNA, conferring on it an open structure. The RuvB hexamer acts as an ATP-dependent pump, pulling dsDNA into and through the RuvAB complex. RuvB forms 2 homohexamers on either side of HJ DNA bound by 1 or 2 RuvA tetramers; 4 subunits per hexamer contact DNA at a time. Coordinated motions by a converter formed by DNA-disengaged RuvB subunits stimulates ATP hydrolysis and nucleotide exchange. Immobilization of the converter enables RuvB to convert the ATP-contained energy into a lever motion, pulling 2 nucleotides of DNA out of the RuvA tetramer per ATP hydrolyzed, thus driving DNA branch migration. The RuvB motors rotate together with the DNA substrate, which together with the progressing nucleotide cycle form the mechanistic basis for DNA recombination by continuous HJ branch migration. Branch migration allows RuvC to scan DNA until it finds its consensus sequence, where it cleaves and resolves cruciform DNA. This Escherichia coli O17:K52:H18 (strain UMN026 / ExPEC) protein is Holliday junction branch migration complex subunit RuvB.